The primary structure comprises 463 residues: Cysteine--tRNA ligase (463 aa).

Position 28 (cysteine 28) interacts with Zn(2+). Residues 30 to 40 carry the 'HIGH' region motif; the sequence is VTIYDLCHIGH. Cysteine 209, histidine 234, and glutamate 238 together coordinate Zn(2+). Positions 266–270 match the 'KMSKS' region motif; it reads KMSKS. Lysine 269 lines the ATP pocket.

This sequence belongs to the class-I aminoacyl-tRNA synthetase family. In terms of assembly, monomer. Requires Zn(2+) as cofactor.

The protein resides in the cytoplasm. The enzyme catalyses tRNA(Cys) + L-cysteine + ATP = L-cysteinyl-tRNA(Cys) + AMP + diphosphate. This chain is Cysteine--tRNA ligase, found in Tolumonas auensis (strain DSM 9187 / NBRC 110442 / TA 4).